Consider the following 512-residue polypeptide: MAKTLDSPGVLVVDFGGQYAHLIARRIRELGVYSEIVPATSLDALGEALPRAAGVVLSGGPGSVWGSRHDEAAAMVLQLGKPVLGICYGHQLLAKVLGGEVGRSPLPEFGPTEVEVLDYGILLNGLPSRFKVWMSHYDAVLRPPGEAKVLARTPGSPVAAMELWGRVFGVQWHPEVRHTQYGREVLDNWLSLVGAPRTWRPGDMVSELVESVKKEVGDALAVAAVSGGVDSTVAALIAKKAIGSRLYPVFIDHGLHPEGEVERVVKLLSRLGLEPVMVDAGEEFLAALEGVGDPEEKRRVVGRVYAEVLERAARDIGAEYLVQGTIYPDVIESGARPGADTIKTHHNVGGLPKDMRLKLVEPLRYFYKDEVRLLAEKLGVPRELIWKQPVPGPGLAVRVEGPITREKLRIVRRADAIVREEVEAAGLGGKLWQYFAVLTASMATGVRGDSRSYGYVVAVRAVESVDAMTAKPAELPWWLLERIARRITSEIPEVVRVVYDITSKPPSTIEWE.

The region spanning 9–198 (GVLVVDFGGQ…WLSLVGAPRT (190 aa)) is the Glutamine amidotransferase type-1 domain. Catalysis depends on Cys87, which acts as the Nucleophile. Active-site residues include His173 and Glu175. The region spanning 199–387 (WRPGDMVSEL…LGVPRELIWK (189 aa)) is the GMPS ATP-PPase domain. 226–232 (SGGVDST) provides a ligand contact to ATP.

The enzyme catalyses XMP + L-glutamine + ATP + H2O = GMP + L-glutamate + AMP + diphosphate + 2 H(+). It functions in the pathway purine metabolism; GMP biosynthesis; GMP from XMP (L-Gln route): step 1/1. Its function is as follows. Catalyzes the synthesis of GMP from XMP. The polypeptide is GMP synthase [glutamine-hydrolyzing] (guaA) (Aeropyrum pernix (strain ATCC 700893 / DSM 11879 / JCM 9820 / NBRC 100138 / K1)).